The chain runs to 214 residues: Phosphoenolpyruvate guanylyltransferase (214 aa).

Residues Thr148, Gly163, and Ser166 each coordinate phosphoenolpyruvate.

The protein belongs to the CofC family.

The catalysed reaction is phosphoenolpyruvate + GTP + H(+) = enolpyruvoyl-2-diphospho-5'-guanosine + diphosphate. The protein operates within cofactor biosynthesis; coenzyme F420 biosynthesis. In terms of biological role, guanylyltransferase that catalyzes the activation of phosphoenolpyruvate (PEP) as enolpyruvoyl-2-diphospho-5'-guanosine, via the condensation of PEP with GTP. It is involved in the biosynthesis of coenzyme F420, a hydride carrier cofactor. The polypeptide is Phosphoenolpyruvate guanylyltransferase (Mycolicibacterium gilvum (strain PYR-GCK) (Mycobacterium gilvum (strain PYR-GCK))).